A 962-amino-acid chain; its full sequence is Leucine--tRNA ligase (962 aa).

Residues 40–51 carry the 'HIGH' region motif; it reads PYPSGAGLHVGH. A 'KMSKS' region motif is present at residues 737-741; sequence KMSKS. Lys740 contributes to the ATP binding site.

This sequence belongs to the class-I aminoacyl-tRNA synthetase family.

Its subcellular location is the cytoplasm. It catalyses the reaction tRNA(Leu) + L-leucine + ATP = L-leucyl-tRNA(Leu) + AMP + diphosphate. The chain is Leucine--tRNA ligase from Flavobacterium psychrophilum (strain ATCC 49511 / DSM 21280 / CIP 103535 / JIP02/86).